Here is a 112-residue protein sequence, read N- to C-terminus: Protein NIM1-INTERACTING 3 (112 aa).

Disordered stretches follow at residues 1 to 20 and 77 to 112; these read MDRD…EEKM and EKAA…NLSL. 2 coiled-coil regions span residues 1-35 and 69-96; these read MDRD…EMRK and NKAE…SKEK. The span at 77 to 89 shows a compositional bias: low complexity; sequence EKAANESSSASNE.

The protein belongs to the NPR1-interactor family. In terms of assembly, interacts with NPR1 C-terminal region.

Its subcellular location is the nucleus. The protein is Protein NIM1-INTERACTING 3 of Arabidopsis thaliana (Mouse-ear cress).